The primary structure comprises 78 residues: Nucleocapsid VP1 (78 aa).

As to quaternary structure, homodimer.

It localises to the virion. Its function is as follows. Completely wraps the viral circular dsDNA genome to form a nucleoprotein filament. These interactions between the viral genome and the nucleocapsid proteins probably maintain the DNA in A-form. This certainly protects the viral DNA under conditions such as the extreme desiccation of its host. This Sulfolobus (SPV1) protein is Nucleocapsid VP1.